Reading from the N-terminus, the 598-residue chain is mRNA-capping enzyme (598 aa).

The tract at residues methionine 1–proline 215 is TPase. Positions leucine 25–alanine 183 constitute a Tyrosine-protein phosphatase domain. Cysteine 126 (phosphocysteine intermediate) is an active-site residue. Residues alanine 186–lysine 227 form a disordered region. A compositionally biased stretch (acidic residues) spans cysteine 193–glycine 206. Low complexity predominate over residues serine 207 to serine 218. Positions glycine 233–glutamine 598 are GTase. The N6-GMP-lysine intermediate role is filled by lysine 298. Residues arginine 303, arginine 319, aspartate 347–glutamate 349, lysine 462–lysine 464, and arginine 532–lysine 537 each bind GTP. A disordered region spans residues arginine 575–glutamine 598.

It in the N-terminal section; belongs to the non-receptor class of the protein-tyrosine phosphatase family. In the C-terminal section; belongs to the eukaryotic GTase family.

The protein localises to the nucleus. It carries out the reaction a 5'-end triphospho-ribonucleoside in mRNA + H2O = a 5'-end diphospho-ribonucleoside in mRNA + phosphate + H(+). It catalyses the reaction a 5'-end diphospho-ribonucleoside in mRNA + GTP + H(+) = a 5'-end (5'-triphosphoguanosine)-ribonucleoside in mRNA + diphosphate. In terms of biological role, bifunctional mRNA-capping enzyme exhibiting RNA 5'-triphosphate monophosphatase activity in the N-terminal part and mRNA guanylyltransferase activity in the C-terminal part. Catalyzes the first two steps of cap formation: by removing the gamma-phosphate from the 5'-triphosphate end of nascent mRNA to yield a diphosphate end, and by transferring the GMP moiety of GTP to the 5'-diphosphate terminus of RNA via a covalent enzyme-GMP reaction intermediate. The chain is mRNA-capping enzyme (rngtt) from Danio rerio (Zebrafish).